We begin with the raw amino-acid sequence, 375 residues long: Meiotic driver cw27 (375 aa).

Disordered stretches follow at residues 1-42 and 74-103; these read MKNK…STLP and DYDE…GTTD. Basic and acidic residues predominate over residues 11–29; it reads SMDELSTKNDNEIDLEKGP. 7 consecutive transmembrane segments (helical) span residues 108 to 128, 145 to 165, 172 to 192, 208 to 228, 245 to 265, 272 to 292, and 336 to 356; these read FLIK…PAVC, WTLI…SWCF, AVKV…ISLA, EMMI…FGCV, TISA…WTLW, LQVL…MSLF, and VIGF…NAIG.

It belongs to the WTF family. Homomer. Forms protein aggregates. The two isoforms can interact with each other and with themselves. High sequence similarity is required for their interaction.

The protein resides in the spore membrane. The protein localises to the vacuole. It is found in the membrane. Its subcellular location is the ascus epiplasm. It localises to the cytoplasm. The protein resides in the endoplasmic reticulum. Functionally, promotes unequal transmission of alleles from the parental zygote to progeny spores by acting as poison/antidote system where the poison and antidote proteins are produced from the same locus; the poison component is trans-acting and targets all spores within an ascus whereas the antidote component is spore-specific, leading to poisoning of all progeny that do not inherit the allele. In terms of biological role, localizes isoform 2 to the vacuole thereby facilitating its degradation. Forms toxic aggregates that disrupt spore maturation. The chain is Meiotic driver cw27 from Schizosaccharomyces pombe (Fission yeast).